The sequence spans 750 residues: Protein psiO (750 aa).

The N-terminal stretch at 1 to 22 (MKEKIKLSLLILTSIILAVANS) is a signal peptide. At 23 to 688 (QTQPKTLAMT…GCNTAAVVST (666 aa)) the chain is on the extracellular side. Asn-129 carries N-linked (GlcNAc...) asparagine glycosylation. Positions 140–286 (QEYFPINGKG…DDYCGVCNGD (147 aa)) constitute a PA14 domain. N-linked (GlcNAc...) asparagine glycans are attached at residues Asn-447, Asn-506, Asn-554, Asn-571, and Asn-659. A helical membrane pass occupies residues 689–709 (AVIAGVTVAAVVGLGIFLYGG). Over 710–750 (KKGYDYYQDNKSKGMTGANSNPLYKESGNAGQNPLYNDNNL) the chain is Cytoplasmic. The tract at residues 727–750 (ANSNPLYKESGNAGQNPLYNDNNL) is disordered. A compositionally biased stretch (polar residues) spans 738 to 750 (NAGQNPLYNDNNL).

The protein belongs to the prespore-cell-inducing factor family.

It is found in the membrane. The polypeptide is Protein psiO (psiO) (Dictyostelium discoideum (Social amoeba)).